The sequence spans 376 residues: GTPase Obg (376 aa).

One can recognise an Obg domain in the interval 2–161 (ASFVDEVLIR…RVVHVELRIV (160 aa)). One can recognise an OBG-type G domain in the interval 162–328 (ADVGFVGLPN…LQEAFVRLSD (167 aa)). GTP-binding positions include 168 to 175 (GLPNAGKS), 193 to 197 (FTTRI), 215 to 218 (DVPG), 282 to 285 (TKLD), and 309 to 311 (SVH). Residues S175 and T195 each coordinate Mg(2+).

It belongs to the TRAFAC class OBG-HflX-like GTPase superfamily. OBG GTPase family. As to quaternary structure, monomer. Mg(2+) serves as cofactor.

Its subcellular location is the cytoplasm. An essential GTPase which binds GTP, GDP and possibly (p)ppGpp with moderate affinity, with high nucleotide exchange rates and a fairly low GTP hydrolysis rate. Plays a role in control of the cell cycle, stress response, ribosome biogenesis and in those bacteria that undergo differentiation, in morphogenesis control. The protein is GTPase Obg of Treponema pallidum (strain Nichols).